The primary structure comprises 489 residues: Ecdysteroid UDP-glucosyltransferase (489 aa).

Residues 1–17 (MVFLIIALTLLATGARA) form the signal peptide.

It belongs to the UDP-glycosyltransferase family.

Its function is as follows. Catalyzes the transfer of glucose from UDP-glucose to ecdysteroids which are insect molting hormones. Expression of egt interferes with normal insect development and block molting. In Orgyia pseudotsugata (Douglas-fir tussock moth), this protein is Ecdysteroid UDP-glucosyltransferase (EGT).